A 74-amino-acid chain; its full sequence is Cytochrome c oxidase subunit 3 (74 aa).

Helical transmembrane passes span 15–37 (SPWPLTGAIGAMTTVSGMVKWFH) and 42–59 (SLFLLGNIITILTVYQWW).

It belongs to the cytochrome c oxidase subunit 3 family. As to quaternary structure, component of the cytochrome c oxidase (complex IV, CIV), a multisubunit enzyme composed of a catalytic core of 3 subunits and several supernumerary subunits. The complex exists as a monomer or a dimer and forms supercomplexes (SCs) in the inner mitochondrial membrane with ubiquinol-cytochrome c oxidoreductase (cytochrome b-c1 complex, complex III, CIII).

Its subcellular location is the mitochondrion inner membrane. The enzyme catalyses 4 Fe(II)-[cytochrome c] + O2 + 8 H(+)(in) = 4 Fe(III)-[cytochrome c] + 2 H2O + 4 H(+)(out). In terms of biological role, component of the cytochrome c oxidase, the last enzyme in the mitochondrial electron transport chain which drives oxidative phosphorylation. The respiratory chain contains 3 multisubunit complexes succinate dehydrogenase (complex II, CII), ubiquinol-cytochrome c oxidoreductase (cytochrome b-c1 complex, complex III, CIII) and cytochrome c oxidase (complex IV, CIV), that cooperate to transfer electrons derived from NADH and succinate to molecular oxygen, creating an electrochemical gradient over the inner membrane that drives transmembrane transport and the ATP synthase. Cytochrome c oxidase is the component of the respiratory chain that catalyzes the reduction of oxygen to water. Electrons originating from reduced cytochrome c in the intermembrane space (IMS) are transferred via the dinuclear copper A center (CU(A)) of subunit 2 and heme A of subunit 1 to the active site in subunit 1, a binuclear center (BNC) formed by heme A3 and copper B (CU(B)). The BNC reduces molecular oxygen to 2 water molecules using 4 electrons from cytochrome c in the IMS and 4 protons from the mitochondrial matrix. The protein is Cytochrome c oxidase subunit 3 (mt:CoIII) of Drosophila simulans (Fruit fly).